We begin with the raw amino-acid sequence, 243 residues long: Pyridoxine 5'-phosphate synthase (243 aa).

Asparagine 7 is a 3-amino-2-oxopropyl phosphate binding site. 9 to 10 (DH) contributes to the 1-deoxy-D-xylulose 5-phosphate binding site. Arginine 18 is a 3-amino-2-oxopropyl phosphate binding site. The Proton acceptor role is filled by histidine 43. The 1-deoxy-D-xylulose 5-phosphate site is built by arginine 45 and histidine 50. Glutamate 70 functions as the Proton acceptor in the catalytic mechanism. Residue threonine 100 coordinates 1-deoxy-D-xylulose 5-phosphate. Histidine 191 serves as the catalytic Proton donor. 3-amino-2-oxopropyl phosphate contacts are provided by residues glycine 192 and 213–214 (GH).

It belongs to the PNP synthase family. As to quaternary structure, homooctamer; tetramer of dimers.

The protein resides in the cytoplasm. The catalysed reaction is 3-amino-2-oxopropyl phosphate + 1-deoxy-D-xylulose 5-phosphate = pyridoxine 5'-phosphate + phosphate + 2 H2O + H(+). It functions in the pathway cofactor biosynthesis; pyridoxine 5'-phosphate biosynthesis; pyridoxine 5'-phosphate from D-erythrose 4-phosphate: step 5/5. Catalyzes the complicated ring closure reaction between the two acyclic compounds 1-deoxy-D-xylulose-5-phosphate (DXP) and 3-amino-2-oxopropyl phosphate (1-amino-acetone-3-phosphate or AAP) to form pyridoxine 5'-phosphate (PNP) and inorganic phosphate. In Magnetococcus marinus (strain ATCC BAA-1437 / JCM 17883 / MC-1), this protein is Pyridoxine 5'-phosphate synthase.